The sequence spans 492 residues: Phosphoenolpyruvate carboxylase (492 aa).

This sequence belongs to the PEPCase type 2 family. In terms of assembly, homotetramer. Requires Mg(2+) as cofactor.

The enzyme catalyses oxaloacetate + phosphate = phosphoenolpyruvate + hydrogencarbonate. Catalyzes the irreversible beta-carboxylation of phosphoenolpyruvate (PEP) to form oxaloacetate (OAA), a four-carbon dicarboxylic acid source for the tricarboxylic acid cycle. The protein is Phosphoenolpyruvate carboxylase of Halobacterium salinarum (strain ATCC 29341 / DSM 671 / R1).